A 297-amino-acid chain; its full sequence is HTH-type transcriptional regulator ArgP (297 aa).

The region spanning 4-60 (PDYRTLQALDAVIRERGFERAAQKLCITQSAVSQRIKQLENLFGQPLLVRTIPPRPT) is the HTH lysR-type domain. Residues 21–40 (FERAAQKLCITQSAVSQRIK) constitute a DNA-binding region (H-T-H motif).

This sequence belongs to the LysR transcriptional regulatory family. Homodimer.

In terms of biological role, controls the transcription of genes involved in arginine and lysine metabolism. The chain is HTH-type transcriptional regulator ArgP from Pectobacterium atrosepticum (strain SCRI 1043 / ATCC BAA-672) (Erwinia carotovora subsp. atroseptica).